Here is a 505-residue protein sequence, read N- to C-terminus: 4-alpha-glucanotransferase (505 aa).

It belongs to the disproportionating enzyme family.

Its subcellular location is the cytoplasm. The catalysed reaction is Transfers a segment of a (1-&gt;4)-alpha-D-glucan to a new position in an acceptor, which may be glucose or a (1-&gt;4)-alpha-D-glucan.. In Synechocystis sp. (strain ATCC 27184 / PCC 6803 / Kazusa), this protein is 4-alpha-glucanotransferase (malQ).